The primary structure comprises 130 residues: Ribosome biogenesis inhibitor MINAS-60 (130 aa).

The segment at 61 to 130 (SKVQRIPTRP…RRRRPVTSSC (70 aa)) is disordered. A compositionally biased stretch (basic residues) spans 109 to 130 (KGRRRRRRMRRRRRRRPVTSSC).

As to quaternary structure, interacts with 60S ribosome assembly factors GTPBP4 and MRTO4.

It localises to the nucleus. It is found in the nucleolus. Functionally, acts as a late-stage inhibitor of pre-60S ribosome assembly by preventing pre-60S ribosome export from nucleus. This is Ribosome biogenesis inhibitor MINAS-60 from Mus musculus (Mouse).